Here is a 152-residue protein sequence, read N- to C-terminus: Endoribonuclease YbeY (152 aa).

Residues His-112, His-116, and His-122 each coordinate Zn(2+).

This sequence belongs to the endoribonuclease YbeY family. Requires Zn(2+) as cofactor.

The protein localises to the cytoplasm. Its function is as follows. Single strand-specific metallo-endoribonuclease involved in late-stage 70S ribosome quality control and in maturation of the 3' terminus of the 16S rRNA. This is Endoribonuclease YbeY from Pseudoalteromonas translucida (strain TAC 125).